A 571-amino-acid polypeptide reads, in one-letter code: Phosphatidylinositol-3,5-bisphosphate 3-phosphatase MTMR2 (571 aa).

Residues 1 to 67 (MEEPPLLPGE…GVINRVEKIG (67 aa)) enclose the GRAM domain. A Myotubularin phosphatase domain is found at 133–508 (GWKVYDPIWE…RHLELWVGYY (376 aa)). A 1,2-diacyl-sn-glycero-3-phospho-(1D-myo-inositol-3,5-bisphosphate) contacts are provided by Asn258, Asn283, and Ile284. Asn258, Asn283, and Ile284 together coordinate a 1,2-diacyl-sn-glycero-3-phospho-(1D-myo-inositol-3-phosphate). The active-site Phosphocysteine intermediate is the Cys345. The a 1,2-diacyl-sn-glycero-3-phospho-(1D-myo-inositol-3,5-bisphosphate) site is built by Ser346, Asp347, Gly348, Trp349, Asp350, Arg351, Arg387, and Arg391. A 1,2-diacyl-sn-glycero-3-phospho-(1D-myo-inositol-3-phosphate) is bound by residues Ser346, Asp347, Gly348, Trp349, Asp350, and Arg351. An a 1,2-diacyl-sn-glycero-3-phospho-(1D-myo-inositol-3-phosphate)-binding site is contributed by Arg391. Residues 521 to 553 (VHNRYKELLAKRAELQKKVEELQREITNRSTSS) adopt a coiled-coil conformation. The tract at residues 544 to 571 (REITNRSTSSSERAGSPAQCVTPVQTVV) is disordered.

The protein belongs to the protein-tyrosine phosphatase family. Non-receptor class myotubularin subfamily. In terms of assembly, homooligomer and heterooligomer.

It localises to the cytoplasm. The protein resides in the early endosome membrane. It catalyses the reaction a 1,2-diacyl-sn-glycero-3-phospho-(1D-myo-inositol-3,5-bisphosphate) + H2O = a 1,2-diacyl-sn-glycero-3-phospho-(1D-myo-inositol-5-phosphate) + phosphate. It carries out the reaction a 1,2-diacyl-sn-glycero-3-phospho-(1D-myo-inositol-3-phosphate) + H2O = a 1,2-diacyl-sn-glycero-3-phospho-(1D-myo-inositol) + phosphate. The enzyme catalyses 1,2-dioctanoyl-sn-glycero-3-phospho-(1-D-myo-inositol-3-phosphate) + H2O = 1,2-dioctanoyl-sn-glycero-3-phospho-(1D-myo-inositol) + phosphate. The catalysed reaction is 1,2-dioctanoyl-sn-glycero-3-phospho-(1D-myo-inositol-3,5-bisphosphate) + H2O = 1,2-dioctanoyl-sn-glycero-3-phospho-(1D-myo-inositol-5-phosphate) + phosphate. Its function is as follows. Lipid phosphatase that specifically dephosphorylates the D-3 position of phosphatidylinositol 3-phosphate and phosphatidylinositol 3,5-bisphosphate, generating phosphatidylinositol and phosphatidylinositol 5-phosphate. Regulates the level of these phosphoinositides critical for various biological processes including autophagy initiation and autophagosome maturation. The protein is Phosphatidylinositol-3,5-bisphosphate 3-phosphatase MTMR2 of Gallus gallus (Chicken).